A 183-amino-acid chain; its full sequence is Ribonuclease H (183 aa).

The RNase H type-1 domain maps to 2–151 (SQARFIAFSD…VDQLAQAAAR (150 aa)). Positions 11, 57, 79, and 143 each coordinate Mg(2+).

The protein belongs to the RNase H family. In terms of assembly, monomer. Mg(2+) is required as a cofactor.

The protein resides in the cytoplasm. It catalyses the reaction Endonucleolytic cleavage to 5'-phosphomonoester.. Endonuclease that specifically degrades the RNA of RNA-DNA hybrids. The sequence is that of Ribonuclease H from Anaeromyxobacter dehalogenans (strain 2CP-1 / ATCC BAA-258).